The sequence spans 380 residues: O-phospho-L-seryl-tRNA:Cys-tRNA synthase (380 aa).

Pyridoxal 5'-phosphate is bound by residues 86-87 (AR), N192, and 215-217 (SGH). The residue at position 218 (K218) is an N6-(pyridoxal phosphate)lysine.

Belongs to the SepCysS family. As to quaternary structure, homodimer. Interacts with SepRS. Pyridoxal 5'-phosphate is required as a cofactor.

The catalysed reaction is O-phospho-L-seryl-tRNA(Cys) + hydrogen sulfide + H(+) = L-cysteinyl-tRNA(Cys) + phosphate. Converts O-phospho-L-seryl-tRNA(Cys) (Sep-tRNA(Cys)) to L-cysteinyl-tRNA(Cys) (Cys-tRNA(Cys)). The protein is O-phospho-L-seryl-tRNA:Cys-tRNA synthase of Methanococcus maripaludis (strain C5 / ATCC BAA-1333).